The sequence spans 794 residues: Inactive zinc metalloprotease C354.09c (794 aa).

Positions 1-56 are disordered; it reads MTDEKHVYVPPPKDPPSYEEVALHSALNNSAPPNDGEQNETSMEEMEIIEPPSEDS. A helical membrane pass occupies residues 91–111; that stretch reads IPFQFLYLAVIATVIILASYY.

Belongs to the peptidase M28 family. M28B subfamily.

The protein localises to the membrane. The chain is Inactive zinc metalloprotease C354.09c from Schizosaccharomyces pombe (strain 972 / ATCC 24843) (Fission yeast).